Here is a 322-residue protein sequence, read N- to C-terminus: MIFSTLEHILTHISFSVVSIVITIHLITLLADEFVELYDSSEKGMITTFFCITGLLVTRWIFLGHLPLSDLYESLIFLSWSFSIIHMVPYFKKHKNFLSAITAPSTFFTQGFATSGLLTDMHQSEILVPALQSQWLMMHVSMMILGYAALLCGSLFSVAFLVITFRKIIRIFDKSNNLLNNSFFFSEIQYMAERKNVLRNISFLSSRNYYRFQLIQQLDDWGYRIISIGFIFLTIGILSGAVWANEAWGSYWNWDPKETWAFITWTIFAIYFHIRTNKKLEGFHSAIVASIGFLLIWICYFGVNLLGIGLHSYGSFTLTISI.

The next 8 helical transmembrane spans lie at 9–29, 44–64, 71–91, 97–117, 143–163, 225–245, 254–274, and 286–306; these read ILTH…LITL, GMIT…IFLG, LYES…VPYF, FLSA…TSGL, MILG…FLVI, IISI…VWAN, WDPK…YFHI, and AIVA…VNLL.

The protein belongs to the CcmF/CycK/Ccl1/NrfE/CcsA family. As to quaternary structure, may interact with Ccs1.

It is found in the plastid. It localises to the chloroplast thylakoid membrane. Required during biogenesis of c-type cytochromes (cytochrome c6 and cytochrome f) at the step of heme attachment. In Manihot esculenta (Cassava), this protein is Cytochrome c biogenesis protein CcsA.